Here is a 157-residue protein sequence, read N- to C-terminus: Crossover junction endodeoxyribonuclease RuvC (157 aa).

Residues Asp-7, Glu-66, and Asp-139 contribute to the active site. Mg(2+)-binding residues include Asp-7, Glu-66, and Asp-139.

This sequence belongs to the RuvC family. In terms of assembly, homodimer which binds Holliday junction (HJ) DNA. The HJ becomes 2-fold symmetrical on binding to RuvC with unstacked arms; it has a different conformation from HJ DNA in complex with RuvA. In the full resolvosome a probable DNA-RuvA(4)-RuvB(12)-RuvC(2) complex forms which resolves the HJ. Requires Mg(2+) as cofactor.

It localises to the cytoplasm. It carries out the reaction Endonucleolytic cleavage at a junction such as a reciprocal single-stranded crossover between two homologous DNA duplexes (Holliday junction).. Functionally, the RuvA-RuvB-RuvC complex processes Holliday junction (HJ) DNA during genetic recombination and DNA repair. Endonuclease that resolves HJ intermediates. Cleaves cruciform DNA by making single-stranded nicks across the HJ at symmetrical positions within the homologous arms, yielding a 5'-phosphate and a 3'-hydroxyl group; requires a central core of homology in the junction. The consensus cleavage sequence is 5'-(A/T)TT(C/G)-3'. Cleavage occurs on the 3'-side of the TT dinucleotide at the point of strand exchange. HJ branch migration catalyzed by RuvA-RuvB allows RuvC to scan DNA until it finds its consensus sequence, where it cleaves and resolves the cruciform DNA. This chain is Crossover junction endodeoxyribonuclease RuvC, found in Helicobacter acinonychis (strain Sheeba).